We begin with the raw amino-acid sequence, 141 residues long: Transcription antitermination protein NusB (141 aa).

It belongs to the NusB family.

Functionally, involved in transcription antitermination. Required for transcription of ribosomal RNA (rRNA) genes. Binds specifically to the boxA antiterminator sequence of the ribosomal RNA (rrn) operons. This chain is Transcription antitermination protein NusB, found in Desulfotalea psychrophila (strain LSv54 / DSM 12343).